The primary structure comprises 147 residues: Large ribosomal subunit protein uL15 (147 aa).

The disordered stretch occupies residues 1–58; the sequence is MKLFELKPAPGAKKRPKRVGRGESSGHGKTSTRGHKGQWARSGGGVRPGFEGGQMPLT. Over residues 42–52 the composition is skewed to gly residues; sequence SGGGVRPGFEG.

It belongs to the universal ribosomal protein uL15 family. Part of the 50S ribosomal subunit.

Its function is as follows. Binds to the 23S rRNA. The protein is Large ribosomal subunit protein uL15 of Caldicellulosiruptor saccharolyticus (strain ATCC 43494 / DSM 8903 / Tp8T 6331).